The sequence spans 367 residues: MTKIGVFIPIGSRGWLISTTSPATMPSFELNKAVVQQAEHYGLDFALSMIKLRGYNGPSEYWVHNLESFTLMAGLAAVTKKIQLFASVAMLTMPPAVVARMAATIDSIAPGRFGINMVTGWQPKEYQQMGLELTPEHFARRYDYASEYVQVMRDLWTKGVSNFKGEFFQMDDCKLSPRPSAHIPVVGAGQSERGMRFVAEYGDYNFIGAGGDMNQTDGARTMVAKVEAAAKQSGRDTGAFLLLMVIADRTDELAFAKWELYKQGTDIEALEWQASQAGQDTVAKEGSTAAALVRQIKNPQPTGMLKLIGSYEKVAAMLDEIALSTPGLKGIMLTFDDFVIGMEQFGQYIQPLMRSRNPNLKRNLDAA.

Residues 50-51 (IK), N116, E125, 141-142 (RY), and S191 contribute to the FMN site.

It belongs to the NtaA/SnaA/DszA monooxygenase family. RutA subfamily.

The enzyme catalyses uracil + FMNH2 + NADH + O2 = (Z)-3-ureidoacrylate + FMN + NAD(+) + H2O + H(+). It carries out the reaction thymine + FMNH2 + NADH + O2 = (Z)-2-methylureidoacrylate + FMN + NAD(+) + H2O + H(+). Functionally, catalyzes the pyrimidine ring opening between N-3 and C-4 by an unusual flavin hydroperoxide-catalyzed mechanism, adding oxygen atoms in the process to yield ureidoacrylate peracid, that immediately reacts with FMN forming ureidoacrylate and FMN-N(5)-oxide. The FMN-N(5)-oxide reacts spontaneously with NADH to produce FMN. Requires the flavin reductase RutF to regenerate FMN in vivo. The chain is Pyrimidine monooxygenase RutA from Allorhizobium ampelinum (strain ATCC BAA-846 / DSM 112012 / S4) (Agrobacterium vitis (strain S4)).